A 463-amino-acid polypeptide reads, in one-letter code: Asparagine--tRNA ligase (463 aa).

It belongs to the class-II aminoacyl-tRNA synthetase family. Homodimer.

Its subcellular location is the cytoplasm. The catalysed reaction is tRNA(Asn) + L-asparagine + ATP = L-asparaginyl-tRNA(Asn) + AMP + diphosphate + H(+). The polypeptide is Asparagine--tRNA ligase (Bacillus thuringiensis subsp. konkukian (strain 97-27)).